The chain runs to 196 residues: Dephospho-CoA kinase (196 aa).

The DPCK domain maps to 5–196; it reads IIGLTGGIAT…QVDIALNFEL (192 aa). 13–18 lines the ATP pocket; it reads ATGKTT.

It belongs to the CoaE family.

Its subcellular location is the cytoplasm. It carries out the reaction 3'-dephospho-CoA + ATP = ADP + CoA + H(+). It participates in cofactor biosynthesis; coenzyme A biosynthesis; CoA from (R)-pantothenate: step 5/5. Its function is as follows. Catalyzes the phosphorylation of the 3'-hydroxyl group of dephosphocoenzyme A to form coenzyme A. The polypeptide is Dephospho-CoA kinase (Nostoc sp. (strain PCC 7120 / SAG 25.82 / UTEX 2576)).